The primary structure comprises 788 residues: Putative wall-associated receptor kinase-like 11 (788 aa).

An N-terminal signal peptide occupies residues 1-27; sequence MRCDNNYSFSILFSLLLILILDSKVVS. The Extracellular portion of the chain corresponds to 28 to 375; that stretch reads LSTSCQSKSV…TFNCIGNKTR (348 aa). N-linked (GlcNAc...) asparagine glycans are attached at residues Asn65, Asn80, Asn121, Asn159, Asn233, Asn253, Asn278, Asn295, and Asn310. Positions 306-369 are atypical EGF-like; it reads CICNNVTISG…CVNLPGTFNC (64 aa). Intrachain disulfides connect Cys308-Cys321, Cys343-Cys360, and Cys354-Cys369. A glycan (N-linked (GlcNAc...) asparagine) is linked at Asn372. Residues 376 to 396 form a helical membrane-spanning segment; that stretch reads VTMIGVGSAFGILVLVVGIWW. At 397-788 the chain is on the cytoplasmic side; it reads LRKFLKKRRM…QPLFPHPTWI (392 aa). A Protein kinase domain is found at 451 to 726; sequence FSESRILGQG…KVFTDLEKIL (276 aa). Residues 457–465 and Lys479 contribute to the ATP site; that span reads LGQGGQGTV. Tyr524 bears the Phosphotyrosine mark. Asp576 acts as the Proton acceptor in catalysis. A phosphothreonine mark is found at Thr610 and Thr615. Tyr623 is subject to Phosphotyrosine.

This sequence belongs to the protein kinase superfamily. Ser/Thr protein kinase family.

It localises to the membrane. It carries out the reaction L-seryl-[protein] + ATP = O-phospho-L-seryl-[protein] + ADP + H(+). The catalysed reaction is L-threonyl-[protein] + ATP = O-phospho-L-threonyl-[protein] + ADP + H(+). Functionally, putative serine/threonine-protein kinase that may function as a signaling receptor of extracellular matrix component. The protein is Putative wall-associated receptor kinase-like 11 (WAKL11) of Arabidopsis thaliana (Mouse-ear cress).